An 886-amino-acid chain; its full sequence is Isoleucine--tRNA ligase (886 aa).

A 'HIGH' region motif is present at residues 60-70 (PYANGDIHIGH). Glutamate 546 is an L-isoleucyl-5'-AMP binding site. A 'KMSKS' region motif is present at residues 587-591 (KMSKS). Lysine 590 lines the ATP pocket. Zn(2+) is bound by residues cysteine 856, cysteine 859, cysteine 870, and cysteine 873.

The protein belongs to the class-I aminoacyl-tRNA synthetase family. IleS type 1 subfamily. Monomer. Requires Zn(2+) as cofactor.

The protein localises to the cytoplasm. The enzyme catalyses tRNA(Ile) + L-isoleucine + ATP = L-isoleucyl-tRNA(Ile) + AMP + diphosphate. In terms of biological role, catalyzes the attachment of isoleucine to tRNA(Ile). As IleRS can inadvertently accommodate and process structurally similar amino acids such as valine, to avoid such errors it has two additional distinct tRNA(Ile)-dependent editing activities. One activity is designated as 'pretransfer' editing and involves the hydrolysis of activated Val-AMP. The other activity is designated 'posttransfer' editing and involves deacylation of mischarged Val-tRNA(Ile). In Mesomycoplasma hyopneumoniae (strain 7448) (Mycoplasma hyopneumoniae), this protein is Isoleucine--tRNA ligase.